The following is a 183-amino-acid chain: NADH-ubiquinone oxidoreductase 20.8 kDa subunit (183 aa).

2 consecutive CHCH domains span residues 44 to 87 (GARC…IADI) and 88 to 130 (NKSC…LGLK). Short sequence motifs (cx9C motif) lie at residues 47-57 (CRDYNDDFMQC), 69-79 (CLKEGRRVTRC), 91-101 (CLEEFRKHWTC), and 112-122 (CRPAEWKLNKC). Cystine bridges form between C47–C79, C57–C69, C91–C122, and C101–C112. Residues 161-183 (EPFVPPTQTGDNNKAPAAASSSS) are disordered.

This sequence belongs to the complex I NDUFA8 subunit family. Complex I is composed of about 40 different subunits. This is a component of the hydrophobic fraction. It depends on iron-sulfur cluster as a cofactor.

It localises to the mitochondrion inner membrane. In terms of biological role, accessory subunit of the mitochondrial membrane respiratory chain NADH dehydrogenase (Complex I), that is believed not to be involved in catalysis. Complex I functions in the transfer of electrons from NADH to the respiratory chain. The immediate electron acceptor for the enzyme is believed to be ubiquinone. The sequence is that of NADH-ubiquinone oxidoreductase 20.8 kDa subunit from Neurospora crassa (strain ATCC 24698 / 74-OR23-1A / CBS 708.71 / DSM 1257 / FGSC 987).